A 652-amino-acid chain; its full sequence is DNA ligase (652 aa).

NAD(+) is bound by residues 29–33, 78–79, and Glu107; these read DSQYD and SL. Lys109 functions as the N6-AMP-lysine intermediate in the catalytic mechanism. The NAD(+) site is built by Arg130, Glu164, Lys278, and Lys302. 4 residues coordinate Zn(2+): Cys395, Cys398, Cys413, and Cys418. The BRCT domain occupies 577–652; that stretch reads STDAQLSGLT…IQDEDWLLNL (76 aa).

The protein belongs to the NAD-dependent DNA ligase family. LigA subfamily. It depends on Mg(2+) as a cofactor. The cofactor is Mn(2+).

The catalysed reaction is NAD(+) + (deoxyribonucleotide)n-3'-hydroxyl + 5'-phospho-(deoxyribonucleotide)m = (deoxyribonucleotide)n+m + AMP + beta-nicotinamide D-nucleotide.. Its function is as follows. DNA ligase that catalyzes the formation of phosphodiester linkages between 5'-phosphoryl and 3'-hydroxyl groups in double-stranded DNA using NAD as a coenzyme and as the energy source for the reaction. It is essential for DNA replication and repair of damaged DNA. The chain is DNA ligase from Streptococcus agalactiae serotype III (strain NEM316).